We begin with the raw amino-acid sequence, 191 residues long: GTP-dependent dephospho-CoA kinase (191 aa).

The GTP site is built by aspartate 46, aspartate 65, lysine 67, and glutamate 122.

It belongs to the GTP-dependent DPCK family.

It carries out the reaction 3'-dephospho-CoA + GTP = GDP + CoA + H(+). The protein operates within cofactor biosynthesis; coenzyme A biosynthesis. Functionally, catalyzes the GTP-dependent phosphorylation of the 3'-hydroxyl group of dephosphocoenzyme A to form coenzyme A (CoA). This chain is GTP-dependent dephospho-CoA kinase, found in Methanopyrus kandleri (strain AV19 / DSM 6324 / JCM 9639 / NBRC 100938).